The primary structure comprises 130 residues: Protein ApaG (130 aa).

An ApaG domain is found at 3-127 (RATTRKIQVT…FSLDVPHMAR (125 aa)).

This chain is Protein ApaG, found in Azorhizobium caulinodans (strain ATCC 43989 / DSM 5975 / JCM 20966 / LMG 6465 / NBRC 14845 / NCIMB 13405 / ORS 571).